Consider the following 320-residue polypeptide: MRQTKTGILLANLGTPDAPTPEAVKRYLKQFLSDRRVVDTPRLLWWPLLRGVILPLRSPRVAKLYQSIWMDGGSPLMVYSREQQQALAARLPDTPVALGMSYGSPSLESAVDELLASDVDHIVVLPLYPQYSCSTVGAVWDELGRILARKRRIPGISFIRDYADDSAYIDALAKSARESFARHGEPDVLLLSYHGIPQRYADEGDDYPQRCRDTTRELVSALGLPPEKVMMTFQSRFGREPWLTPYTDETLKMLGEKGTGHIQVMCPGFAADCLETLEEIAEQNREIFLEAGGKKYAYIPALNATPEHIDMMLKLTAPYR.

Histidine 194 and glutamate 275 together coordinate Fe cation.

It belongs to the ferrochelatase family. In terms of assembly, monomer.

It is found in the cytoplasm. The catalysed reaction is heme b + 2 H(+) = protoporphyrin IX + Fe(2+). It participates in porphyrin-containing compound metabolism; protoheme biosynthesis; protoheme from protoporphyrin-IX: step 1/1. Its function is as follows. Catalyzes the ferrous insertion into protoporphyrin IX. In Salmonella dublin (strain CT_02021853), this protein is Ferrochelatase.